The primary structure comprises 467 residues: Gamma-aminobutyric acid receptor subunit rho-3 (467 aa).

An N-terminal signal peptide occupies residues 1-24 (MVLAFQLVSFTYIWIILKPNVCAA). At 25–266 (SNIKMTHQRC…LFINFVLRRH (242 aa)) the chain is on the extracellular side. 2 residues coordinate 4-aminobutanoate: R111 and S175. A disulfide bond links C184 and C198. E203 provides a ligand contact to 4-aminobutanoate. N220 carries N-linked (GlcNAc...) asparagine glycosylation. A helical membrane pass occupies residues 267 to 287 (VFFFVLQTYFPAILMVMLSWV). The Cytoplasmic portion of the chain corresponds to 288–299 (SFWIDRRAVPAR). The helical transmembrane segment at 300–320 (VSLGITTVLTMSTIITAVSAS) threads the bilayer. Topologically, residues 321–331 (MPQVSYLKAVD) are extracellular. The helical transmembrane segment at 332-352 (VYLWVSSLFVFLSVIEYAAVN) threads the bilayer. The interval 347 to 448 (EYAAVNYLTT…NNHVIDTYSR (102 aa)) is interaction with SQSTM1. Over 353 to 446 (YLTTVEERKQ…LENNHVIDTY (94 aa)) the chain is Cytoplasmic. Residues 447-467 (SRILFPIVYILFNLFYWGVYV) traverse the membrane as a helical segment.

The protein belongs to the ligand-gated ion channel (TC 1.A.9) family. Gamma-aminobutyric acid receptor (TC 1.A.9.5) subfamily. GABRR3 sub-subfamily. In terms of assembly, three rho subunits (rho-1/GBRR1, rho-2/GBRR2 and rho-3/GBRR3) coassemble either to form functional homopentamers or heteropentamers. Forms a ternary complex with SQSTM1 and PRKCZ.

It is found in the postsynaptic cell membrane. Its subcellular location is the cell membrane. The enzyme catalyses chloride(in) = chloride(out). With respect to regulation, inhibited by TPMPA, a rho-specific antagonist, when forming a homopentamer. Rho subunit of the pentameric ligand-gated chloride channels responsible for mediating the effects of gamma-aminobutyric acid (GABA), the major inhibitory neurotransmitter in the brain. Rho-containing GABA-gated chloride channels are a subclass of GABA(A) receptors (GABAARs) entirely composed of rho subunits, where GABA molecules bind at the rho intersubunit interfaces. When activated by GABA, rho-GABAARs selectively allow the flow of chloride anions across the cell membrane down their electrochemical gradient. This is Gamma-aminobutyric acid receptor subunit rho-3 from Homo sapiens (Human).